Reading from the N-terminus, the 444-residue chain is Signal recognition particle 54 kDa protein (444 aa).

Residues 102-109 (GVQGSGKT), 184-188 (DTAGR), and 244-247 (SKMD) each bind GTP.

This sequence belongs to the GTP-binding SRP family. SRP54 subfamily. As to quaternary structure, part of the signal recognition particle protein translocation system, which is composed of SRP and FtsY. Archaeal SRP consists of a 7S RNA molecule of 300 nucleotides and two protein subunits: SRP54 and SRP19.

The protein resides in the cytoplasm. It catalyses the reaction GTP + H2O = GDP + phosphate + H(+). Its function is as follows. Involved in targeting and insertion of nascent membrane proteins into the cytoplasmic membrane. Binds to the hydrophobic signal sequence of the ribosome-nascent chain (RNC) as it emerges from the ribosomes. The SRP-RNC complex is then targeted to the cytoplasmic membrane where it interacts with the SRP receptor FtsY. The protein is Signal recognition particle 54 kDa protein of Sulfolobus acidocaldarius (strain ATCC 33909 / DSM 639 / JCM 8929 / NBRC 15157 / NCIMB 11770).